The following is a 146-amino-acid chain: Snaclec 5 (146 aa).

Residues methionine 1–alanine 23 form the signal peptide. 3 disulfides stabilise this stretch: cysteine 25–cysteine 36, cysteine 53–cysteine 142, and cysteine 119–cysteine 134. The C-type lectin domain maps to tyrosine 32–lysine 143.

The protein belongs to the snaclec family. As to quaternary structure, heterodimer; disulfide-linked. Expressed by the venom gland.

The protein localises to the secreted. Its function is as follows. Interferes with one step of hemostasis (modulation of platelet aggregation, or coagulation cascade, for example). In Echis pyramidum leakeyi (Leakey's carpet viper), this protein is Snaclec 5.